The following is a 664-amino-acid chain: Macoilin (664 aa).

4 helical membrane-spanning segments follow: residues 28–48 (TFLYLKFLVVWALVLLADFVL), 75–95 (AFSVFFVCVAFTSNIICLLFI), 120–140 (VCLPTVSLWILFVYIEAAIRF), and 154–174 (FAAHCIGYPVVTLGFGFKSYV). Positions 253-265 (REKGKEKDKDAKK) are enriched in basic and acidic residues. The segment at 253 to 274 (REKGKEKDKDAKKHNLGINNNN) is disordered. Ser-305 is subject to Phosphoserine. Polar residues predominate over residues 320–348 (KNYKNASGVVNSSPRSHSATNGSIPSSSS). The tract at residues 320 to 375 (KNYKNASGVVNSSPRSHSATNGSIPSSSSKNEKKQKCTSKSPSTHKDLMENCIPNN) is disordered. Residue Asn-324 is glycosylated (N-linked (GlcNAc...) asparagine). Phosphoserine is present on Ser-332. 2 N-linked (GlcNAc...) asparagine glycosylation sites follow: Asn-340 and Asn-452. Residues 630–664 (TSPLSPVSPHYSSKFVETSPSGLDPNASVYQPLKK) are disordered. Residues Ser-631 and Ser-634 each carry the phosphoserine modification. Asn-655 carries N-linked (GlcNAc...) asparagine glycosylation.

The protein belongs to the macoilin family.

It localises to the rough endoplasmic reticulum membrane. Its subcellular location is the nucleus membrane. Its function is as follows. Plays a role in the regulation of neuronal activity. The polypeptide is Macoilin (MACO1) (Canis lupus familiaris (Dog)).